The sequence spans 242 residues: Ribosomal RNA small subunit methyltransferase G (242 aa).

S-adenosyl-L-methionine is bound by residues glycine 78, phenylalanine 83, 129-130 (AE), and arginine 148.

This sequence belongs to the methyltransferase superfamily. RNA methyltransferase RsmG family.

The protein localises to the cytoplasm. Its function is as follows. Specifically methylates the N7 position of a guanine in 16S rRNA. The sequence is that of Ribosomal RNA small subunit methyltransferase G from Lachnoclostridium phytofermentans (strain ATCC 700394 / DSM 18823 / ISDg) (Clostridium phytofermentans).